Here is a 489-residue protein sequence, read N- to C-terminus: Hyaluronoglucuronidase (489 aa).

The Proton donor role is filled by Glu176. Glu290 functions as the Nucleophile in the catalytic mechanism.

It belongs to the glycosyl hydrolase 79 family.

The enzyme catalyses Random hydrolysis of (1-&gt;3)-linkages between beta-D-glucuronate and N-acetyl-D-glucosamine residues in hyaluronate.. Hyaluronidase activity is inhibited by Mn(2+), Cu(2+) and Fe(3+). In terms of biological role, hyaluronidase that mediates hydrolysis of (1-&gt;3)-linkages between beta-D-glucuronate and N-acetyl-D-glucosamine residues in hyaluronate. Very specific to hyaluronate: not able to hydrolyze chitin, heparin or chondroitin sulfate. This is Hyaluronoglucuronidase from Hirudo nipponia (Korean blood-sucking leech).